We begin with the raw amino-acid sequence, 154 residues long: Golgi-associated plant pathogenesis-related protein 1 (154 aa).

The tract at residues 1-21 (MGKSASKQFHNEVLKAHNEYR) is disordered. A lipid anchor (N-myristoyl glycine) is attached at Gly-2. A compositionally biased stretch (basic and acidic residues) spans 9-21 (FHNEVLKAHNEYR). In terms of domain architecture, SCP spans 14-132 (LKAHNEYRQK…SDGSSFVVAR (119 aa)). Positions 30–53 (KLCKNLNREAQQYSEALASTRILK) form a coiled coil. The interval 91–98 (NFQQPGFT) is interaction with CAV1.

Belongs to the CRISP family. In terms of assembly, homodimer. Interacts with CAV1. As to expression, highest expression in lung and peripheral leukocytes, and minor expression in liver and kidney.

It is found in the golgi apparatus membrane. The polypeptide is Golgi-associated plant pathogenesis-related protein 1 (GLIPR2) (Homo sapiens (Human)).